We begin with the raw amino-acid sequence, 143 residues long: Small ribosomal subunit protein uS12 (143 aa).

Basic residues predominate over residues 1 to 19; the sequence is MGKPRGLRTARKHVNHRRD. The tract at residues 1-23 is disordered; the sequence is MGKPRGLRTARKHVNHRRDQRWA. A 3-hydroxyproline modification is found at P62.

The protein belongs to the universal ribosomal protein uS12 family. Component of the 40S small ribosomal subunit. In terms of processing, hydroxylation at Pro-62 affects translation termination efficiency.

It localises to the cytoplasm. Its subcellular location is the cytosol. It is found in the rough endoplasmic reticulum. The protein is Small ribosomal subunit protein uS12 (RpS23) of Drosophila melanogaster (Fruit fly).